We begin with the raw amino-acid sequence, 1260 residues long: Phosphatidylinositol 3,4,5-trisphosphate 5-phosphatase 2 (1260 aa).

The SH2 domain maps to 25–121 (WYHRDLSRAA…GLVCALLLPV (97 aa)). Residues 126–136 (ELDPPDERDAS) are compositionally biased toward basic and acidic residues. Residues 126–178 (ELDPPDERDASDGEDEKPPLPPRSGTSVSAPLGPSSPPAAPEPPTPAVESAPN) form a disordered region. Position 136 is a phosphoserine (S136). The segment covering 159–171 (PSSPPAAPEPPTP) has biased composition (pro residues). S243 and S355 each carry phosphoserine. The residue at position 888 (Y888) is a Phosphotyrosine. Position 892 is a phosphoserine (S892). The segment at 899-1120 (GAKSKAPSVS…FLGEAAGGDD (222 aa)) is disordered. Pro residues predominate over residues 940–952 (PPPTGRPPAPPRA). The SH3-binding signature appears at 946 to 951 (PPAPPR). A compositionally biased stretch (basic and acidic residues) spans 953-967 (APREEPLTPRLKPEG). Position 960 is a phosphothreonine (T960). The NPXY motif signature appears at 985-988 (NPAY). At Y988 the chain carries Phosphotyrosine. 3 stretches are compositionally biased toward pro residues: residues 998–1013 (LLPP…PVPP), 1050–1061 (LPPPDFPPPPLP), and 1090–1108 (LPPP…PLPP). S1133 carries the phosphoserine modification. A Phosphotyrosine modification is found at Y1164. The segment at 1181–1200 (EDLAEEAPCPQAGRTGGLGE) is disordered. One can recognise an SAM domain in the interval 1198-1260 (LGEAGMGAWL…LLLDTLQLSK (63 aa)). S1259 carries the phosphoserine modification.

This sequence belongs to the inositol 1,4,5-trisphosphate 5-phosphatase family. Interacts with tyrosine phosphorylated form of SHC1. Interacts with EGFR. Upon stimulation by the EGF signaling pathway, it forms a complex with SHC1 and EGFR. Interacts with cytoskeletal protein SORBS3/vinexin, promoting its localization to the periphery of cells. Forms a complex with filamin (FLNA or FLNB), actin, GPIb (GP1BA or GP1BB) that regulates cortical and submembraneous actin. Interacts with c-Met/MET, when c-Met/MET is phosphorylated on 'Tyr-1356'. Interacts with p130Cas/BCAR1. Interacts with CENTD3/ARAP3 via its SAM domain. Interacts with c-Cbl/CBL and CAP/SORBS1. Interacts with activated EPHA2 receptor. Interacts with receptor FCGR2A. Interacts with receptor FCGR2B. Interacts with tyrosine kinase ABL1. Interacts with tyrosine kinase TEC. Interacts with CSF1R. Interacts (via N-terminus) with SH3YL1 (via SH3 domain). Interacts with FCRL6 (tyrosine phosphorylated form). Interacts (via SH2 domain) with tyrosine phosphorylated KLRC1 (via ITIM). Interacts with NEDD9/HEF1. Post-translationally, tyrosine phosphorylated by the members of the SRC family after exposure to a diverse array of extracellular stimuli such as insulin, growth factors such as EGF or PDGF, chemokines, integrin ligands and hypertonic and oxidative stress. May be phosphorylated upon IgG receptor FCGR2B-binding. Phosphorylated at Tyr-988 following cell attachment and spreading. Phosphorylated at Tyr-1164 following EGF signaling pathway stimulation. As to expression, expressed abundantly in skeletal muscle tissue.

Its subcellular location is the cytoplasm. The protein localises to the cytosol. It localises to the cytoskeleton. The protein resides in the membrane. It is found in the cell projection. Its subcellular location is the filopodium. The protein localises to the lamellipodium. It localises to the basal cell membrane. The protein resides in the nucleus. It is found in the nucleus speckle. Its subcellular location is the spindle pole. It carries out the reaction a 1,2-diacyl-sn-glycero-3-phospho-(1D-myo-inositol-3,4,5-trisphosphate) + H2O = a 1,2-diacyl-sn-glycero-3-phospho-(1D-myo-inositol-3,4-bisphosphate) + phosphate. The enzyme catalyses 1,2-dioctanoyl-sn-glycero-3-phospho-(1D-myo-inositol-3,4,5-trisphosphate) + H2O = 1,2-dioctanoyl-sn-glycero-3-phospho-(1D-myo-inositol-3,4-bisphosphate) + phosphate. The catalysed reaction is 1,2-dihexadecanoyl-sn-glycero-3-phospho-(1D-myo-inositol-3,4,5-trisphosphate) + H2O = 1,2-dihexadecanoyl-sn-glycero-3-phospho-(1D-myo-inositol-3,4-bisphosphate) + phosphate. Its activity is regulated as follows. Activated upon translocation to the sites of synthesis of PtdIns(3,4,5)P3 in the membrane. Enzymatic activity is enhanced in the presence of phosphatidylserine. In terms of biological role, phosphatidylinositol (PtdIns) phosphatase that specifically hydrolyzes the 5-phosphate of phosphatidylinositol-3,4,5-trisphosphate (PtdIns(3,4,5)P3) to produce PtdIns(3,4)P2, thereby negatively regulating the PI3K (phosphoinositide 3-kinase) pathways. Required for correct mitotic spindle orientation and therefore progression of mitosis. Plays a central role in regulation of PI3K-dependent insulin signaling, although the precise molecular mechanisms and signaling pathways remain unclear. While overexpression reduces both insulin-stimulated MAP kinase and Akt activation, its absence does not affect insulin signaling or GLUT4 trafficking. Confers resistance to dietary obesity. May act by regulating AKT2, but not AKT1, phosphorylation at the plasma membrane. Part of a signaling pathway that regulates actin cytoskeleton remodeling. Required for the maintenance and dynamic remodeling of actin structures as well as in endocytosis, having a major impact on ligand-induced EGFR internalization and degradation. Participates in regulation of cortical and submembraneous actin by hydrolyzing PtdIns(3,4,5)P3 thereby regulating membrane ruffling. Regulates cell adhesion and cell spreading. Required for HGF-mediated lamellipodium formation, cell scattering and spreading. Acts as a negative regulator of EPHA2 receptor endocytosis by inhibiting via PI3K-dependent Rac1 activation. Acts as a regulator of neuritogenesis by regulating PtdIns(3,4,5)P3 level and is required to form an initial protrusive pattern, and later, maintain proper neurite outgrowth. Acts as a negative regulator of the FC-gamma-RIIA receptor (FCGR2A). Mediates signaling from the FC-gamma-RIIB receptor (FCGR2B), playing a central role in terminating signal transduction from activating immune/hematopoietic cell receptor systems. Involved in EGF signaling pathway. Upon stimulation by EGF, it is recruited by EGFR and dephosphorylates PtdIns(3,4,5)P3. Plays a negative role in regulating the PI3K-PKB pathway, possibly by inhibiting PKB activity. Down-regulates Fc-gamma-R-mediated phagocytosis in macrophages independently of INPP5D/SHIP1. In macrophages, down-regulates NF-kappa-B-dependent gene transcription by regulating macrophage colony-stimulating factor (M-CSF)-induced signaling. Plays a role in the localization of AURKA and NEDD9/HEF1 to the basolateral membrane at interphase in polarized cysts, thereby mediates cell cycle homeostasis, cell polarization and cilia assembly. Additionally promotion of cilia growth is also facilitated by hydrolysis of (PtdIns(3,4,5)P3) to PtdIns(3,4)P2. Promotes formation of apical membrane-initiation sites during the initial stages of lumen formation via Rho family-induced actin filament organization and CTNNB1 localization to cell-cell contacts. May also hydrolyze PtdIns(1,3,4,5)P4, and could thus affect the levels of the higher inositol polyphosphates like InsP6. Involved in endochondral ossification. This is Phosphatidylinositol 3,4,5-trisphosphate 5-phosphatase 2 from Sus scrofa (Pig).